The sequence spans 379 residues: Chaperone protein DnaJ (379 aa).

One can recognise a J domain in the interval 5 to 69 (EYYERLGVDK…QKRAAYDQYG (65 aa)). Residues 141-223 (GVEKQVKYNR…CHGSGHEKVA (83 aa)) form a CR-type zinc finger. Positions 154, 157, 171, 174, 197, 200, 211, and 214 each coordinate Zn(2+). 4 CXXCXGXG motif repeats span residues 154–161 (CHTCDGSG), 171–178 (CHKCGGRG), 197–204 (CDVCHGTG), and 211–218 (CTTCHGSG).

Belongs to the DnaJ family. As to quaternary structure, homodimer. Zn(2+) serves as cofactor.

The protein localises to the cytoplasm. Its function is as follows. Participates actively in the response to hyperosmotic and heat shock by preventing the aggregation of stress-denatured proteins and by disaggregating proteins, also in an autonomous, DnaK-independent fashion. Unfolded proteins bind initially to DnaJ; upon interaction with the DnaJ-bound protein, DnaK hydrolyzes its bound ATP, resulting in the formation of a stable complex. GrpE releases ADP from DnaK; ATP binding to DnaK triggers the release of the substrate protein, thus completing the reaction cycle. Several rounds of ATP-dependent interactions between DnaJ, DnaK and GrpE are required for fully efficient folding. Also involved, together with DnaK and GrpE, in the DNA replication of plasmids through activation of initiation proteins. The protein is Chaperone protein DnaJ of Lactococcus lactis subsp. cremoris (strain SK11).